A 315-amino-acid chain; its full sequence is Acyl transferase (315 aa).

Catalysis depends on charge relay system residues serine 116, aspartate 213, and histidine 243.

The protein belongs to the LuxD family.

Its pathway is lipid metabolism; fatty acid reduction for biolumincescence. Its function is as follows. Acyl transferase is part of the fatty acid reductase system required for aldehyde biosynthesis; it produces fatty acids for the luminescent reaction. This chain is Acyl transferase, found in Photobacterium leiognathi.